The sequence spans 361 residues: Alanine racemase (361 aa).

Lys34 functions as the Proton acceptor; specific for D-alanine in the catalytic mechanism. The residue at position 34 (Lys34) is an N6-(pyridoxal phosphate)lysine. Residue Arg129 participates in substrate binding. Tyr254 (proton acceptor; specific for L-alanine) is an active-site residue. Residue Met302 participates in substrate binding.

It belongs to the alanine racemase family. Requires pyridoxal 5'-phosphate as cofactor.

The catalysed reaction is L-alanine = D-alanine. The enzyme catalyses L-serine = D-serine. The protein operates within amino-acid biosynthesis; D-alanine biosynthesis; D-alanine from L-alanine: step 1/1. Its function is as follows. Catalyzes the interconversion of L-alanine and D-alanine. Likely plays an important role in supplying D-alanine, which is an indispensable constituent in the biosynthesis of bacterial cell-wall peptidoglycan. To a lesser extent, is also able to racemize L-serine and D-serine. Does not act on other proteinogenic amino-acids. The chain is Alanine racemase (alr1) from Vibrio cholerae serotype O1 (strain ATCC 39315 / El Tor Inaba N16961).